The primary structure comprises 66 residues: Defensin-like peptide 2/4 (66 aa).

The N-terminal stretch at 1–22 (MRLAYLLLLLVAVLFQAGGGSA) is a signal peptide. Residues 23–24 (KP) constitute a propeptide that is removed on maturation. Residue Met-26 is modified to D-methionine; in form DLP-2. Cystine bridges form between Cys-33-Cys-63, Cys-40-Cys-56, and Cys-48-Cys-64.

In terms of processing, stereoinversion of L-Met-26 (in DLP-4) to D-Met-26 (in DLP-2). Produced by the crural gland and detected in venom from the spur located on each male hind leg. Is also widely expressed in both male and female tissues, including brain, intestine, kidney, lung, spleen and testis.

It is found in the secreted. In terms of biological role, does not show antimicrobial, myotoxic, hemolytic and cell-promoting activities. This is Defensin-like peptide 2/4 from Ornithorhynchus anatinus (Duckbill platypus).